The chain runs to 265 residues: Serine protease harobin (265 aa).

The N-terminal stretch at 1–18 is a signal peptide; it reads MPLIRVLASLLILQLSYG. Residues 19–33 constitute a propeptide that is removed on maturation; sequence KSLDNGAKAITSLDR. The Peptidase S1 domain occupies 34–257; the sequence is IIGGFECNPS…YKDWIEGIIA (224 aa). 7 disulfides stabilise this stretch: Cys40–Cys172, Cys59–Cys75, Cys106–Cys152, Cys107–Cys264, Cys151–Cys218, Cys183–Cys197, and Cys208–Cys233. The Charge relay system role is filled by His74. Residue Asn112 is glycosylated (N-linked (GlcNAc...) asparagine). The active-site Charge relay system is the Asp119. Asn130 carries an N-linked (GlcNAc...) asparagine glycan. The active-site Charge relay system is Ser212.

Belongs to the peptidase S1 family. Snake venom subfamily. Monomer. Harobin contains three additional Cys residues than other snake venom serine proteases, suggesting an additional disulfide bond. In addition, it is more stable than other snake 6-disulfide-bond serine proteases, since it is less sensitive to DTT. As to expression, expressed by the venom gland.

It is found in the secreted. Inhibited by PMSF. Functionally, serine protein with fibrinolytic and fibrinogenolytic activities. Degrades Bbeta-chain (FGB) of fibrinogen first and then the Aalpha-chain (FGA). Gamma-chain (FGG) are also digested on prolonged incubation. In vitro, it cleaves high molecular weight (HMW) kininogen (KNG) releasing bradykinin that promotes vasodilation. In vitro and in vivo, it cleaves angiotensin-2 (AGT). This explains the reduction of blood pressure in hypertensive rats. Also has antithrombotic effects on thrombosis animal models. The polypeptide is Serine protease harobin (Hydrophis hardwickii (Hardwick's spine-bellied seasnake)).